We begin with the raw amino-acid sequence, 1111 residues long: Serine/threonine-protein kinase Nek10 (1111 aa).

Residues 1–16 (MPDQDTKAKSTEKTAD) show a composition bias toward basic and acidic residues. Disordered stretches follow at residues 1 to 24 (MPDQ…TTTR) and 47 to 72 (AINF…HRAR). A compositionally biased stretch (polar residues) spans 47–63 (AINFDSAQNNMTKSEPT). A coiled-coil region spans residues 481–514 (YKDLVSQLNLLLEDELKQIAENIESINQKKAPLK). A Protein kinase domain is found at 519 to 791 (YAVLDHLGSG…MISDVMMKYL (273 aa)). ATP contacts are provided by residues 525–533 (LGSGAFGCV) and K548. D655 acts as the Proton acceptor in catalysis.

The protein belongs to the protein kinase superfamily. NEK Ser/Thr protein kinase family. NIMA subfamily. As to quaternary structure, interacts with RAF1 and MAP2K1; the interaction is direct with RAF1 and required for ERK1/2-signaling pathway activation in response to UV irradiation. Requires Mg(2+) as cofactor. As to expression, expressed in the mammary gland, lung, spleen, and kidney.

The catalysed reaction is L-seryl-[protein] + ATP = O-phospho-L-seryl-[protein] + ADP + H(+). The enzyme catalyses L-threonyl-[protein] + ATP = O-phospho-L-threonyl-[protein] + ADP + H(+). Plays a role in the cellular response to UV irradiation. Mediates G2/M cell cycle arrest, MEK autoactivation and ERK1/2-signaling pathway activation in response to UV irradiation. In ciliated cells, it is involved in the regulation of mucociliary transport. In Mus musculus (Mouse), this protein is Serine/threonine-protein kinase Nek10.